The following is a 74-amino-acid chain: DNA-directed RNA polymerase subunit omega (74 aa).

The protein belongs to the RNA polymerase subunit omega family. As to quaternary structure, the RNAP catalytic core consists of 2 alpha, 1 beta, 1 beta' and 1 omega subunit. When a sigma factor is associated with the core the holoenzyme is formed, which can initiate transcription.

The catalysed reaction is RNA(n) + a ribonucleoside 5'-triphosphate = RNA(n+1) + diphosphate. Promotes RNA polymerase assembly. Latches the N- and C-terminal regions of the beta' subunit thereby facilitating its interaction with the beta and alpha subunits. The polypeptide is DNA-directed RNA polymerase subunit omega (Campylobacter jejuni subsp. jejuni serotype O:6 (strain 81116 / NCTC 11828)).